Consider the following 1141-residue polypeptide: LRR receptor-like serine/threonine-protein kinase RGI1 (1141 aa).

Residues 1–33 form the signal peptide; the sequence is MSLHSLIFFSSSSSSLLFSFFFIFIFCFSLSDA. Residues 34–726 are Extracellular-facing; that stretch reads EQNPEASILY…DASRTRKLRL (693 aa). Cys-69 and Cys-77 are joined by a disulfide. A glycan (N-linked (GlcNAc...) asparagine) is linked at Asn-71. LRR repeat units lie at residues 80–104, 105–128, 130–152, 153–176, 178–200, 202–225, 226–249, 250–273, 275–297, 298–321, 322–345, 347–369, 370–392, 394–417, 418–441, 443–464, 465–489, 490–513, 514–537, 538–561, 563–585, 586–609, 610–634, 636–657, and 658–682; these read QGFITDIDIESVPLQLSLPKNLPAF, RSLQKLTISGANLTGTLPESLGDC, GLKVLDLSSNGLVGDIPWSLSKL, RNLETLILNSNQLTGKIPPDISKC, KLKSLILFDNLLTGSIPTELGKL, GLEVIRIGGNKEISGQIPSEIGDC, SNLTVLGLAETSVSGNLPSSLGKL, KKLETLSIYTTMISGEIPSDLGNC, ELVDLFLYENSLSGSIPREIGQL, TKLEQLFLWQNSLVGGIPEEIGNC, SNLKMIDLSLNLLSGSIPSSIGRL, FLEEFMISDNKFSGSIPTTISNC, SSLVQLQLDKNQISGLIPSELGT, TKLTLFFAWSNQLEGSIPPGLADC, TDLQALDLSRNSLTGTIPSGLFML, NLTKLLLISNSLSGFIPQEIGN, CSSLVRLRLGFNRITGEIPSGIGSL, KKINFLDFSSNRLHGKVPDEIGSC, SELQMIDLSNNSLEGSLPNPVSSL, SGLQVLDVSANQFSGKIPASLGRL, SLNKLILSKNLFSGSIPTSLGMC, SGLQLLDLGSNELSGEIPSELGDI, ENLEIALNLSSNRLTGKIPSKIASL, KLSILDLSHNMLEGDLAPLANI, and ENLVSLNISYNSFSGYLPDNKLFRQ. Asn-116 is a glycosylation site (N-linked (GlcNAc...) asparagine). Short sequence motifs (small peptide recognition) lie at residues 185–186 and 207–210; these read FD and RIGG. An N-linked (GlcNAc...) asparagine glycan is attached at Asn-227. 2 consecutive short sequence motifs (small peptide recognition) follow at residues 230-235 and Tyr-258; that span reads VLGLAE. A glycan (N-linked (GlcNAc...) asparagine) is linked at Asn-272. Positions 280-282 match the Small peptide recognition motif; sequence FLY. A glycan (N-linked (GlcNAc...) asparagine) is linked at Asn-320. Short sequence motifs (small peptide recognition) lie at residues 328 to 331 and 350 to 352; these read DLSL and EFM. N-linked (GlcNAc...) asparagine glycosylation occurs at Asn-368. 2 consecutive short sequence motifs (small peptide recognition) follow at residues 398–402 and 424–427; these read LFFAW and DLSR. Residue Asn-443 is glycosylated (N-linked (GlcNAc...) asparagine). Residues 446-450 carry the Small peptide recognition motif; it reads KLLLI. An N-linked (GlcNAc...) asparagine glycan is attached at Asn-464. Positions 470–472 match the Small peptide recognition motif; the sequence is RLR. N-linked (GlcNAc...) asparagine glycosylation is present at Asn-523. Asn-617 carries N-linked (GlcNAc...) asparagine glycosylation. N-linked (GlcNAc...) asparagine glycosylation is present at Asn-664. Residues 727–747 form a helical membrane-spanning segment; that stretch reads TLALLITLTVVLMILGAVAVI. At 748–1141 the chain is on the cytoplasmic side; the sequence is RARRNIDNER…LLYSSSSSIE (394 aa). Residues 786–1074 enclose the Protein kinase domain; sequence LVEPNVIGKG…EIKQEREEYA (289 aa). ATP contacts are provided by residues 792–800 and Lys-814; that span reads IGKGCSGVV. Tyr-868 and Tyr-906 each carry phosphotyrosine. The Proton acceptor role is filled by Asp-919. Residues Tyr-962 and Tyr-969 each carry the phosphotyrosine modification.

Belongs to the protein kinase superfamily. Ser/Thr protein kinase family. As to quaternary structure, interacts with beet curly top virus AL4/C4. Binds to RGF peptides such as RGF1, GLV5/CLEL1/RGF2, GLV7/CLEL3/RGF3, GLV3/RGF4, GLV10/CLEL7/RGF5 and RGF10/CLELN; these interactions trigger the formation of heterodimers with SERK1, SERK2 or BAK1/SERK3 via LRR regions. Interacts with UBP13. Post-translationally, phosphorylated and ubiquitinated upon interaction with RGF1, thus leading to activation a subsequent degradation. Stabilized by UBP12 and UBP13-mediated deubiquitination. In terms of processing, autophosphorylated. Expressed in roots.

It localises to the cell membrane. The catalysed reaction is L-seryl-[protein] + ATP = O-phospho-L-seryl-[protein] + ADP + H(+). The enzyme catalyses L-threonyl-[protein] + ATP = O-phospho-L-threonyl-[protein] + ADP + H(+). Functionally, together with RGI2, RGI3, RGI4 and RGI5, acts as a receptor of RGF peptides (e.g. RGF1, GLV5/CLEL1/RGF2, GLV7/CLEL3/RGF3, GLV3/RGF4, GLV10/CLEL7/RGF5 and RGF10/CLELN), peptide hormones which maintain the postembryonic root stem cell niche by regulating the expression levels and patterns of the transcription factor PLETHORA (PLT, e.g. PLT1 and PLT2). Links RGF peptides signal with their downstream components. This is LRR receptor-like serine/threonine-protein kinase RGI1 from Arabidopsis thaliana (Mouse-ear cress).